The sequence spans 869 residues: Dimethylglycine dehydrogenase, mitochondrial (869 aa).

Residues 1-43 constitute a mitochondrion transit peptide; the sequence is MLRPGALRLRGLALRGSPRRPSSAGLREGQESPASPPEWKDRA. The tract at residues 14–39 is disordered; that stretch reads LRGSPRRPSSAGLREGQESPASPPEW. FAD contacts are provided by residues 52 to 53, 73 to 74, and 80 to 88; these read CV, EK, and GSTWHAAGL. His-84 is subject to Tele-8alpha-FAD histidine. Lys-107 carries the N6-acetyllysine modification. Lys-141 carries the post-translational modification N6-acetyllysine; alternate. Lys-141 is subject to N6-succinyllysine; alternate. Lys-161 is modified (N6-acetyllysine). Val-212 lines the FAD pocket. At Lys-216 the chain carries N6-acetyllysine. An FAD-binding site is contributed by Trp-244. An N6-succinyllysine mark is found at Lys-310 and Lys-312. 2 positions are modified to N6-acetyllysine: Lys-328 and Lys-353. 390–395 serves as a coordination point for FAD; that stretch reads FGYGII. N6-acetyllysine; alternate is present on residues Lys-427, Lys-469, and Lys-516. An N6-succinyllysine; alternate mark is found at Lys-427, Lys-469, and Lys-516. A (6S)-5,6,7,8-tetrahydrofolate-binding site is contributed by 573–575; that stretch reads ELT. Lys-648 is modified (N6-acetyllysine; alternate). Lys-648 carries the N6-succinyllysine; alternate modification. (6S)-5,6,7,8-tetrahydrofolate-binding positions include Tyr-669, 676–678, and Tyr-737; that span reads ELY. Lys-757 carries the N6-acetyllysine modification. An N6-acetyllysine; alternate modification is found at Lys-786. An N6-succinyllysine; alternate modification is found at Lys-786. Residue Lys-788 is modified to N6-succinyllysine.

Belongs to the GcvT family. The cofactor is FAD.

The protein localises to the mitochondrion. It carries out the reaction (6S)-5,6,7,8-tetrahydrofolyl-(gamma-L-Glu)(n) + N,N-dimethylglycine + oxidized [electron-transfer flavoprotein] + H(+) = (6R)-5,10-methylenetetrahydrofolyl-(gamma-L-Glu)(n) + sarcosine + reduced [electron-transfer flavoprotein]. It functions in the pathway amine and polyamine degradation; betaine degradation; sarcosine from betaine: step 2/2. Its function is as follows. Catalyzes the demethylation of N,N-dimethylglycine to sarcosine. Also has activity with sarcosine in vitro. The polypeptide is Dimethylglycine dehydrogenase, mitochondrial (Dmgdh) (Mus musculus (Mouse)).